A 182-amino-acid polypeptide reads, in one-letter code: Probable RNA 2'-phosphotransferase (182 aa).

It belongs to the KptA/TPT1 family.

Its function is as follows. Removes the 2'-phosphate from RNA via an intermediate in which the phosphate is ADP-ribosylated by NAD followed by a presumed transesterification to release the RNA and generate ADP-ribose 1''-2''-cyclic phosphate (APPR&gt;P). May function as an ADP-ribosylase. In Acetivibrio thermocellus (strain ATCC 27405 / DSM 1237 / JCM 9322 / NBRC 103400 / NCIMB 10682 / NRRL B-4536 / VPI 7372) (Clostridium thermocellum), this protein is Probable RNA 2'-phosphotransferase.